Reading from the N-terminus, the 246-residue chain is Uridylate kinase (246 aa).

19–22 (KISG) serves as a coordination point for ATP. Gly61 is a UMP binding site. ATP-binding residues include Gly62 and Arg66. UMP contacts are provided by residues Asp81 and 142–149 (TGNPFFTT). ATP is bound by residues Thr169, Gln170, Tyr175, and Asp178.

Belongs to the UMP kinase family. In terms of assembly, homohexamer.

It localises to the cytoplasm. The catalysed reaction is UMP + ATP = UDP + ADP. It functions in the pathway pyrimidine metabolism; CTP biosynthesis via de novo pathway; UDP from UMP (UMPK route): step 1/1. With respect to regulation, inhibited by UTP. Functionally, catalyzes the reversible phosphorylation of UMP to UDP. The polypeptide is Uridylate kinase (Wolbachia sp. subsp. Brugia malayi (strain TRS)).